We begin with the raw amino-acid sequence, 132 residues long: Succinate dehydrogenase cytochrome b560 subunit (132 aa).

The next 2 membrane-spanning stretches (helical) occupy residues 32–49 (LYLVFFLFVLFCSIKFLF) and 59–81 (KFVKTCFFFILSFFIVFIVFSMY). His86 provides a ligand contact to heme. Residues 107-127 (VTMSTKLSLSLSLVLVLINCL) traverse the membrane as a helical segment.

This sequence belongs to the cytochrome b560 family. Forms part of complex II containing four subunits: a 70 kDa flavoprotein (FP), a 27 kDa iron-sulfur protein (IP), a cytochrome B and a membrane-anchoring protein. Heme serves as cofactor.

It is found in the mitochondrion inner membrane. It functions in the pathway carbohydrate metabolism; tricarboxylic acid cycle. In terms of biological role, membrane-anchoring subunit of succinate dehydrogenase (SDH) that is involved in complex II of the mitochondrial electron transport chain and is responsible for transferring electrons from succinate to ubiquinone (coenzyme Q). The chain is Succinate dehydrogenase cytochrome b560 subunit (SDH3) from Cyanidium caldarium (Red alga).